The chain runs to 1458 residues: Phospholipase B1, membrane-associated (1458 aa).

An N-terminal signal peptide occupies residues 1–21; it reads MGLRPGIFLLELLLLLGQGTP. Residues 22 to 1417 lie on the Extracellular side of the membrane; it reads QIHTSPRKST…QAEEAPEVLY (1396 aa). Repeat copies occupy residues 39 to 347, 362 to 707, and 708 to 1054. Residues 39–1402 are 4 X 308-326 AA approximate repeats; it reads ETLKNSPFPC…SPYLYTLRNS (1364 aa). Asn-173 and Asn-240 each carry an N-linked (GlcNAc...) asparagine glycan. Ser-400 is a catalytic residue. Residue Asn-493 is glycosylated (N-linked (GlcNAc...) asparagine). Residue Asp-514 is part of the active site. Residues Asn-529 and Asn-590 are each glycosylated (N-linked (GlcNAc...) asparagine). His-655 is a catalytic residue. Residues Asn-690, Asn-783, Asn-797, Asn-809, Asn-1055, Asn-1113, Asn-1275, and Asn-1378 are each glycosylated (N-linked (GlcNAc...) asparagine). Residues 1064 to 1402 form repeat 4; sequence IENWGSDFLC…SPYLYTLRNS (339 aa). Positions 1403-1445 are necessary for membrane localization; the sequence is RLLPDQAEEAPEVLYWAVPVAAGVGLVVGIIGTVVWRCRRGGR. Residues 1418-1438 form a helical membrane-spanning segment; sequence WAVPVAAGVGLVVGIIGTVVW. The Cytoplasmic segment spans residues 1439 to 1458; the sequence is RCRRGGRREDPPMSLRTVAL.

It belongs to the 'GDSL' lipolytic enzyme family. Phospholipase B1 subfamily. Post-translationally, undergoes proteolytic cleavage in the ileum. As to expression, expressed in the epidermis (at protein level).

It localises to the apical cell membrane. The enzyme catalyses a 1,2-diacyl-sn-glycero-3-phosphocholine + H2O = a 1-acyl-sn-glycero-3-phosphocholine + a fatty acid + H(+). It catalyses the reaction a 1-O-alkyl-2-acyl-sn-glycero-3-phosphocholine + H2O = a 1-O-alkyl-sn-glycero-3-phosphocholine + a fatty acid + H(+). The catalysed reaction is a 1-acyl-sn-glycero-3-phosphocholine + H2O = sn-glycerol 3-phosphocholine + a fatty acid + H(+). It carries out the reaction a triacylglycerol + H2O = a diacylglycerol + a fatty acid + H(+). The enzyme catalyses 1,2-dihexadecanoyl-sn-glycero-3-phosphocholine + H2O = 1-hexadecanoyl-sn-glycero-3-phosphocholine + hexadecanoate + H(+). It catalyses the reaction 1-hexadecanoyl-2-(9Z-octadecenoyl)-sn-glycero-3-phosphocholine + H2O = 1-hexadecanoyl-sn-glycero-3-phosphocholine + (9Z)-octadecenoate + H(+). The catalysed reaction is 1,2-di-(9Z-octadecenoyl)-sn-glycero-3-phosphocholine + H2O = 1-(9Z-octadecenoyl)-sn-glycero-3-phosphocholine + (9Z)-octadecenoate + H(+). It carries out the reaction 1-hexadecanoyl-2-(9Z,12Z-octadecadienoyl)-sn-glycero-3-phosphocholine + H2O = (9Z,12Z)-octadecadienoate + 1-hexadecanoyl-sn-glycero-3-phosphocholine + H(+). The enzyme catalyses 1-hexadecanoyl-2-(9Z,12Z-octadecadienoyl)-sn-glycero-3-phosphocholine + H2O = 2-(9Z,12Z-octadecadienoyl)-sn-glycero-3-phosphocholine + hexadecanoate + H(+). It catalyses the reaction 1-hexadecanoyl-2-(9Z-octadecenoyl)-sn-glycero-3-phosphoethanolamine + H2O = 1-hexadecanoyl-sn-glycero-3-phosphoethanolamine + (9Z)-octadecenoate + H(+). The catalysed reaction is 1-hexadecanoyl-2-(9Z-octadecenoyl)-sn-glycero-3-phospho-(1'-sn-glycerol) + H2O = 1-hexadecanoyl-sn-glycero-3-phospho-(1'-sn-glycerol) + (9Z)-octadecenoate + H(+). It carries out the reaction 1,2-dihexadecanoyl-sn-glycero-3-phosphocholine + 2 H2O = sn-glycerol 3-phosphocholine + 2 hexadecanoate + 2 H(+). The enzyme catalyses 1-O-hexadecyl-2-(9Z)-octadecenoyl-sn-glycero-3-phosphocholine + H2O = 1-O-hexadecyl-sn-glycero-3-phosphocholine + (9Z)-octadecenoate + H(+). It catalyses the reaction 1-hexadecanoyl-sn-glycero-3-phosphocholine + H2O = sn-glycerol 3-phosphocholine + hexadecanoate + H(+). The catalysed reaction is 1,2,3-tri-(9Z-octadecenoyl)-glycerol + H2O = di-(9Z)-octadecenoylglycerol + (9Z)-octadecenoate + H(+). It carries out the reaction 1-hexadecanoyl-2-(9Z)-octadecenoyl-3-octadecanoyl-sn-glycerol + H2O = 1-hexadecanoyl-2-(9Z-octadecenoyl)-sn-glycerol + octadecanoate + H(+). The enzyme catalyses 1,3-dihexadecanoyl-2-(9Z-octadecenoyl)glycerol + H2O = 1,3-dihexadecanoylglycerol + (9Z)-octadecenoate + H(+). It catalyses the reaction 1,3-dihexadecanoyl-2-(9Z-octadecenoyl)glycerol + H2O = 1-hexadecanoyl-2-(9Z-octadecenoyl)-glycerol + hexadecanoate + H(+). The catalysed reaction is 1-hexadecanoyl-2-(9Z)-octadecenoyl-3-octadecanoyl-sn-glycerol + H2O = 1-hexadecanoyl-3-octadecanoyl-sn-glycerol + (9Z)-octadecenoate + H(+). It carries out the reaction 1-hexadecanoyl-2-(9Z)-octadecenoyl-3-octadecanoyl-sn-glycerol + H2O = 2-(9Z-octadecenoyl)-3-octadecanoyl-sn-glycerol + hexadecanoate + H(+). The enzyme catalyses 1-octadecanoyl-2-(9Z,12Z)-octadecadienoyl-sn-glycerol + H2O = 1-octadecanoyl-sn-glycerol + (9Z,12Z)-octadecadienoate + H(+). It catalyses the reaction 1,2-di-(9Z-octadecenoyl)-sn-glycerol + H2O = 1-(9Z-octadecenoyl)-sn-glycerol + (9Z)-octadecenoate + H(+). The catalysed reaction is 2,3-di-(9Z)-octadecenoyl-sn-glycerol + H2O = 3-(9Z-octadecenoyl)-sn-glycerol + (9Z)-octadecenoate + H(+). It carries out the reaction 1,3-di-(9Z-octadecenoyl)-glycerol + H2O = 1-(9Z-octadecenoyl)-glycerol + (9Z)-octadecenoate + H(+). The enzyme catalyses 1-(9Z-octadecenoyl)-glycerol + H2O = glycerol + (9Z)-octadecenoate + H(+). It catalyses the reaction 2-(9Z-octadecenoyl)-glycerol + H2O = glycerol + (9Z)-octadecenoate + H(+). Calcium-independent membrane-associated phospholipase that catalyzes complete diacylation of phospholipids by hydrolyzing both sn-1 and sn-2 fatty acyl chains attached to the glycerol backbone (phospholipase B activity). Has dual phospholipase and lysophospholipase activities toward diacylphospholipids. Preferentially cleaves sn-2 ester bonds over sn-1 bonds. Acts as a lipase toward glycerolipid substrates. Hydrolyzes fatty acyl chains of diacylglycerols with preference for the sn-2 position and of triacylglycerols with not positional selectivity. May also hydrolyze long chain retinyl esters such as retinyl palmitate. May contribute to digestion of dietary phospholipids, glycerolipids and retinoids, facilitating lipid absorption at the brush border. This chain is Phospholipase B1, membrane-associated (PLB1), found in Homo sapiens (Human).